The following is a 359-amino-acid chain: Cell division protein ZipA (359 aa).

At methionine 1 to asparagine 4 the chain is on the periplasmic side. The helical transmembrane segment at threonine 5–serine 25 threads the bilayer. At asparagine 26–lysine 359 the chain is on the cytoplasmic side. A disordered region spans residues proline 78–proline 101.

It belongs to the ZipA family. As to quaternary structure, interacts with FtsZ via their C-terminal domains.

Its subcellular location is the cell inner membrane. Its function is as follows. Essential cell division protein that stabilizes the FtsZ protofilaments by cross-linking them and that serves as a cytoplasmic membrane anchor for the Z ring. Also required for the recruitment to the septal ring of downstream cell division proteins. This is Cell division protein ZipA from Mannheimia succiniciproducens (strain KCTC 0769BP / MBEL55E).